We begin with the raw amino-acid sequence, 180 residues long: Inorganic pyrophosphatase (180 aa).

Lysine 28, arginine 42, and tyrosine 54 together coordinate substrate. 3 residues coordinate Mg(2+): aspartate 66, aspartate 71, and aspartate 102. Tyrosine 139 contributes to the substrate binding site.

Belongs to the PPase family. As to quaternary structure, homohexamer. Mg(2+) serves as cofactor.

The protein resides in the cytoplasm. It catalyses the reaction diphosphate + H2O = 2 phosphate + H(+). Functionally, hydrolyzes PPi generated in anabolic reactions. Catalyzes the hydrolysis of inorganic pyrophosphate (PPi) forming two phosphate ions. In Pseudanabaena sp. (strain PCC 6903), this protein is Inorganic pyrophosphatase.